The chain runs to 95 residues: Beta-defensin 132 (95 aa).

The N-terminal stretch at 1–22 (MKFLLLVLAALGFLTQVIPASA) is a signal peptide. 3 disulfides stabilise this stretch: cysteine 27–cysteine 55, cysteine 35–cysteine 49, and cysteine 39–cysteine 56. The interval 74-95 (HWQSRRRNTQRKDKKQQTTVTS) is disordered. Over residues 76-87 (QSRRRNTQRKDK) the composition is skewed to basic residues.

It belongs to the beta-defensin family.

Its subcellular location is the secreted. In terms of biological role, has antibacterial activity. This is Beta-defensin 132 (DEFB132) from Homo sapiens (Human).